The chain runs to 249 residues: Ditrans,polycis-undecaprenyl-diphosphate synthase ((2E,6E)-farnesyl-diphosphate specific) (249 aa).

Asp-26 is an active-site residue. Residue Asp-26 participates in Mg(2+) binding. Residues 27-30, Trp-31, Arg-39, His-43, and 71-73 each bind substrate; these read GNGR and SRE. Asn-74 (proton acceptor) is an active-site residue. Substrate is bound by residues Trp-75, Arg-77, Arg-194, and 200–202; that span reads RIS. Glu-213 serves as a coordination point for Mg(2+).

It belongs to the UPP synthase family. In terms of assembly, homodimer. Mg(2+) serves as cofactor.

It catalyses the reaction 8 isopentenyl diphosphate + (2E,6E)-farnesyl diphosphate = di-trans,octa-cis-undecaprenyl diphosphate + 8 diphosphate. Catalyzes the sequential condensation of isopentenyl diphosphate (IPP) with (2E,6E)-farnesyl diphosphate (E,E-FPP) to yield (2Z,6Z,10Z,14Z,18Z,22Z,26Z,30Z,34E,38E)-undecaprenyl diphosphate (di-trans,octa-cis-UPP). UPP is the precursor of glycosyl carrier lipid in the biosynthesis of bacterial cell wall polysaccharide components such as peptidoglycan and lipopolysaccharide. The sequence is that of Ditrans,polycis-undecaprenyl-diphosphate synthase ((2E,6E)-farnesyl-diphosphate specific) from Buchnera aphidicola subsp. Schizaphis graminum (strain Sg).